We begin with the raw amino-acid sequence, 397 residues long: Neuroplastin (397 aa).

The N-terminal stretch at 1–28 (MSGSSLPGALALSLLLVSGSLLPGPGAA) is a signal peptide. Ig-like domains follow at residues 29 to 134 (QNAG…PSIT), 148 to 234 (PRIV…IEVK), and 237 to 327 (PDIT…ASVS). Topologically, residues 29-338 (QNAGFVKSPM…VLRVRSHLAP (310 aa)) are extracellular. The cysteines at positions 52 and 116 are disulfide-linked. The segment at 149–161 (RIVTSEEVIIRES) is narpin; mediates binding with FGFR1 and has antidepressant-like activity. Cysteine 169 and cysteine 217 are oxidised to a cystine. Asparagine 170, asparagine 196, asparagine 228, asparagine 283, asparagine 295, and asparagine 316 each carry an N-linked (GlcNAc...) asparagine glycan. A disulfide bridge connects residues cysteine 258 and cysteine 315. The chain crosses the membrane as a helical span at residues 339 to 359 (LWPFLGILAEIIILVVIIVVY). The Cytoplasmic segment spans residues 360–397 (EKRKRPDEVPDDDEPAGPMKTNSTNNHKDKNLRQRNTN). Residues 364–397 (RPDEVPDDDEPAGPMKTNSTNNHKDKNLRQRNTN) are disordered.

In terms of assembly, interacts with ATP2B1; this interaction stabilizes ATP2B1 and increases ATPase activity; this interaction controls T cell calcium homeostasis following T cell activation. Interacts with XKR8; promoting its localization at the cell membrane. Post-translationally, N-glycosylated. As to expression, isoform 1 and isoform 2 are widely expressed with variable levels in brain. Isoform 1 is expressed in cerebellum and midbrain. Isoform 1 and isoform 2 are expressed in cerebral cortex, hippocampus and striatum. Isoform 2 is more abundant in the cerebral cortex than isoform 1.

The protein localises to the cell membrane. Its subcellular location is the postsynaptic density. Its function is as follows. Probable homophilic and heterophilic cell adhesion molecule involved in long term potentiation at hippocampal excitatory synapses through activation of p38MAPK. May also regulate neurite outgrowth by activating the FGFR1 signaling pathway. May play a role in synaptic plasticity. Also acts as a chaperone for ATP2B1; stabilizes ATP2B1 and increases its ATPase activity. Promotes localization of XKR8 at the cell membrane. The protein is Neuroplastin (Nptn) of Mus musculus (Mouse).